The following is a 286-amino-acid chain: 1D-myo-inositol 2-acetamido-2-deoxy-alpha-D-glucopyranoside deacetylase (286 aa).

Residues His12, Asp15, and His147 each coordinate Zn(2+).

Belongs to the MshB deacetylase family. The cofactor is Zn(2+).

The enzyme catalyses 1D-myo-inositol 2-acetamido-2-deoxy-alpha-D-glucopyranoside + H2O = 1D-myo-inositol 2-amino-2-deoxy-alpha-D-glucopyranoside + acetate. In terms of biological role, catalyzes the deacetylation of 1D-myo-inositol 2-acetamido-2-deoxy-alpha-D-glucopyranoside (GlcNAc-Ins) in the mycothiol biosynthesis pathway. This is 1D-myo-inositol 2-acetamido-2-deoxy-alpha-D-glucopyranoside deacetylase from Thermobifida fusca (strain YX).